A 357-amino-acid polypeptide reads, in one-letter code: GPI mannosyltransferase 2 (357 aa).

Helical transmembrane passes span 6 to 26 (TLIVVFVAIKAYLVALALVVP), 86 to 106 (AIAYTAIAVSSLSHLLAALML), 128 to 148 (ILSPAGIFLVAGYTESLFALL), 167 to 187 (VLGASCLLRGNGLLWGIPFLF), 201 to 221 (GVSVVIGGSLVGAVFLYTQYL), 257 to 277 (YWTANNIPNFLFAAPVLYLMY), 286 to 306 (LVPFYTVHAIMGLACVFMWHV), and 334 to 354 (YVVRYIFVWITFQVVMWGAYL).

The protein belongs to the PIGV family.

The protein resides in the endoplasmic reticulum membrane. The protein operates within glycolipid biosynthesis; glycosylphosphatidylinositol-anchor biosynthesis. Its function is as follows. Mannosyltransferase involved in glycosylphosphatidylinositol-anchor biosynthesis. Transfers the second mannose to the glycosylphosphatidylinositol during GPI precursor assembly. The sequence is that of GPI mannosyltransferase 2 (GPI18) from Yarrowia lipolytica (strain CLIB 122 / E 150) (Yeast).